The primary structure comprises 341 residues: Ketol-acid reductoisomerase (NADP(+)) (341 aa).

Residues 1–182 (MATIYYDKDA…GCTRAGVLET (182 aa)) enclose the KARI N-terminal Rossmann domain. NADP(+) contacts are provided by residues 25-28 (YGSQ), Ser51, Ser53, and 83-86 (DQTQ). Residue His108 is part of the active site. Gly134 provides a ligand contact to NADP(+). The 146-residue stretch at 183–328 (TFKEETETDL…KRLRDMMSWI (146 aa)) folds into the KARI C-terminal knotted domain. Residues Asp191, Glu195, Glu227, and Glu231 each contribute to the Mg(2+) site. A substrate-binding site is contributed by Ser252.

This sequence belongs to the ketol-acid reductoisomerase family. Requires Mg(2+) as cofactor.

It carries out the reaction (2R)-2,3-dihydroxy-3-methylbutanoate + NADP(+) = (2S)-2-acetolactate + NADPH + H(+). The enzyme catalyses (2R,3R)-2,3-dihydroxy-3-methylpentanoate + NADP(+) = (S)-2-ethyl-2-hydroxy-3-oxobutanoate + NADPH + H(+). It functions in the pathway amino-acid biosynthesis; L-isoleucine biosynthesis; L-isoleucine from 2-oxobutanoate: step 2/4. It participates in amino-acid biosynthesis; L-valine biosynthesis; L-valine from pyruvate: step 2/4. Involved in the biosynthesis of branched-chain amino acids (BCAA). Catalyzes an alkyl-migration followed by a ketol-acid reduction of (S)-2-acetolactate (S2AL) to yield (R)-2,3-dihydroxy-isovalerate. In the isomerase reaction, S2AL is rearranged via a Mg-dependent methyl migration to produce 3-hydroxy-3-methyl-2-ketobutyrate (HMKB). In the reductase reaction, this 2-ketoacid undergoes a metal-dependent reduction by NADPH to yield (R)-2,3-dihydroxy-isovalerate. This Anaeromyxobacter sp. (strain K) protein is Ketol-acid reductoisomerase (NADP(+)).